A 264-amino-acid polypeptide reads, in one-letter code: Matrilysin (264 aa).

Positions 1-17 (MQLTLFCFVCLLPGHLA) are cleaved as a signal peptide. Residues 18 to 94 (LPLSQEAGDV…PRCGVPDVAE (77 aa)) constitute a propeptide, activation peptide. Residues 85–92 (PRCGVPDV) carry the Cysteine switch motif. Cys87 provides a ligand contact to Zn(2+). Asp153 lines the Ca(2+) pocket. Zn(2+)-binding residues include His163 and Asp165. The Ca(2+) site is built by Asp170, Gly171, Gly173, and Thr175. Position 178 (His178) interacts with Zn(2+). Ca(2+)-binding residues include Gly185, Gly187, and Asp189. Position 191 (His191) interacts with Zn(2+). 2 residues coordinate Ca(2+): Asp193 and Glu196. Residue His214 participates in Zn(2+) binding. Residue Glu215 is part of the active site. Zn(2+)-binding residues include His218 and His224.

It belongs to the peptidase M10A family. Ca(2+) is required as a cofactor. It depends on Zn(2+) as a cofactor. As to expression, expressed in the intestinal epithelium (at protein level).

The protein resides in the secreted. It localises to the extracellular space. It is found in the extracellular matrix. The catalysed reaction is Cleavage of 14-Ala-|-Leu-15 and 16-Tyr-|-Leu-17 in B chain of insulin. No action on collagen types I, II, IV, V. Cleaves gelatin chain alpha2(I) &gt; alpha1(I).. In terms of biological role, degrades casein, gelatins of types I, III, IV, and V, and fibronectin. Activates procollagenase. Its function is as follows. May play a role in tissue reorganization. The sequence is that of Matrilysin (Mmp7) from Mus musculus (Mouse).